The sequence spans 202 residues: Small ribosomal subunit protein uS4c (202 aa).

Residues 13–37 form a disordered region; it reads RRPGVSPGLTSKTLKSKSNYIDRST. A compositionally biased stretch (polar residues) spans 20–37; the sequence is GLTSKTLKSKSNYIDRST. An S4 RNA-binding domain is found at 90-153; sequence MRLDNTIFRL…ESRSMISKNI (64 aa).

The protein belongs to the universal ribosomal protein uS4 family. As to quaternary structure, part of the 30S ribosomal subunit. Contacts protein S5. The interaction surface between S4 and S5 is involved in control of translational fidelity.

The protein localises to the plastid. It localises to the chloroplast. Functionally, one of the primary rRNA binding proteins, it binds directly to 16S rRNA where it nucleates assembly of the body of the 30S subunit. With S5 and S12 plays an important role in translational accuracy. In Takakia lepidozioides (Moss), this protein is Small ribosomal subunit protein uS4c (rps4).